Here is a 657-residue protein sequence, read N- to C-terminus: Protein FAM200B (657 aa).

The protein belongs to the FAM200 family.

This is Protein FAM200B from Homo sapiens (Human).